We begin with the raw amino-acid sequence, 689 residues long: Glycine--tRNA ligase beta subunit (689 aa).

The protein belongs to the class-II aminoacyl-tRNA synthetase family. As to quaternary structure, tetramer of two alpha and two beta subunits.

The protein localises to the cytoplasm. The catalysed reaction is tRNA(Gly) + glycine + ATP = glycyl-tRNA(Gly) + AMP + diphosphate. The sequence is that of Glycine--tRNA ligase beta subunit from Shewanella baltica (strain OS185).